Consider the following 549-residue polypeptide: Pyrophosphate--fructose 6-phosphate 1-phosphotransferase (549 aa).

Glycine 78 lines the diphosphate pocket. Aspartate 172 lines the Mg(2+) pocket. Substrate-binding positions include 200-202 (TID), 239-240 (KY), 247-249 (MGR), glutamate 308, and 421-424 (YEGR). The Proton acceptor role is filled by aspartate 202.

The protein belongs to the phosphofructokinase type A (PFKA) family. PPi-dependent PFK group II subfamily. Clade 'Long' sub-subfamily. As to quaternary structure, homodimer. The cofactor is Mg(2+).

It is found in the cytoplasm. It catalyses the reaction beta-D-fructose 6-phosphate + diphosphate = beta-D-fructose 1,6-bisphosphate + phosphate + H(+). It participates in carbohydrate degradation; glycolysis; D-glyceraldehyde 3-phosphate and glycerone phosphate from D-glucose: step 3/4. Non-allosteric. Its function is as follows. Catalyzes the phosphorylation of D-fructose 6-phosphate, the first committing step of glycolysis. Uses inorganic phosphate (PPi) as phosphoryl donor instead of ATP like common ATP-dependent phosphofructokinases (ATP-PFKs), which renders the reaction reversible, and can thus function both in glycolysis and gluconeogenesis. Consistently, PPi-PFK can replace the enzymes of both the forward (ATP-PFK) and reverse (fructose-bisphosphatase (FBPase)) reactions. In Porphyromonas gingivalis (Bacteroides gingivalis), this protein is Pyrophosphate--fructose 6-phosphate 1-phosphotransferase.